The primary structure comprises 620 residues: 1-deoxy-D-xylulose-5-phosphate synthase (620 aa).

Thiamine diphosphate contacts are provided by residues H75 and A116–S118. Position 147 (D147) interacts with Mg(2+). Residues G148–A149, N177, Y284, and E366 contribute to the thiamine diphosphate site. N177 lines the Mg(2+) pocket.

It belongs to the transketolase family. DXPS subfamily. In terms of assembly, homodimer. The cofactor is Mg(2+). It depends on thiamine diphosphate as a cofactor.

It carries out the reaction D-glyceraldehyde 3-phosphate + pyruvate + H(+) = 1-deoxy-D-xylulose 5-phosphate + CO2. It functions in the pathway metabolic intermediate biosynthesis; 1-deoxy-D-xylulose 5-phosphate biosynthesis; 1-deoxy-D-xylulose 5-phosphate from D-glyceraldehyde 3-phosphate and pyruvate: step 1/1. Catalyzes the acyloin condensation reaction between C atoms 2 and 3 of pyruvate and glyceraldehyde 3-phosphate to yield 1-deoxy-D-xylulose-5-phosphate (DXP). In Bordetella pertussis (strain Tohama I / ATCC BAA-589 / NCTC 13251), this protein is 1-deoxy-D-xylulose-5-phosphate synthase.